A 394-amino-acid chain; its full sequence is 3-ketosteroid-9-alpha-monooxygenase, oxygenase component (394 aa).

In terms of domain architecture, Rieske spans 27–129 (WHCLGLAKDF…TLDQDGLLFV (103 aa)). The [2Fe-2S] cluster site is built by Cys-68, His-70, Cys-87, and His-90. Fe cation is bound by residues Asn-175, His-181, and His-186. Tyr-245 contributes to the substrate binding site. Residue Asp-305 participates in Fe cation binding.

As to quaternary structure, homotrimer. The two-component system 3-ketosteroid-9-alpha-monooxygenase is composed of an oxygenase component KshA and a reductase component KshB. The cofactor is [2Fe-2S] cluster. Requires Fe cation as cofactor.

It carries out the reaction androsta-1,4-diene-3,17-dione + 2 reduced [2Fe-2S]-[ferredoxin] + O2 + 2 H(+) = 9alpha-hydroxyandrosta-1,4-diene-3,17-dione + 2 oxidized [2Fe-2S]-[ferredoxin] + H2O. In terms of biological role, may be involved in the degradation of cholic acid, a steroid acid found predominantly in the bile. In vitro, catalyzes the introduction of a 9alpha-hydroxyl moiety into the ring B of 3-ketosteroid substrates such as 1,4-androstadiene-3,17-dione (ADD), 4-androstene-3,17-dione (AD), 4-androstene-17beta-ol-3-one (testosterone), 4-pregnene-3,20-dione (progesterone), 3-oxo-23,24-bisnorcholesta-4-en-22-oate (4-BNC), 23,24-bisnorcholesta-4-ene-22-oate, 3-oxo-23,24-bisnorcholaesta-1,4-dien-22-oate (1,4-BNC), 23,24-bisnorcholesta-1,4-diene-22-oate and 3-oxo-23,24-bisnorcholesta-1,4-dien-22-oyl-coenzyme A thioester (1,4-BNC-CoA). KshA1 has the highest specificity for steroids possessing an isopropionyl side chain at C17. In Rhodococcus rhodochrous, this protein is 3-ketosteroid-9-alpha-monooxygenase, oxygenase component.